The primary structure comprises 318 residues: Acetyl-coenzyme A carboxylase carboxyl transferase subunit beta (318 aa).

Residues 25–294 (LWSKCSECGT…AVKGELPAPA (270 aa)) form the CoA carboxyltransferase N-terminal domain. Zn(2+)-binding residues include Cys29, Cys32, Cys48, and Cys51. Residues 29–51 (CSECGTMLFHRELSDNLNVCTNC) form a C4-type zinc finger. Residues 286 to 318 (VKGELPAPAPLESDAETALASDTDPNGAPPSKD) form a disordered region.

The protein belongs to the AccD/PCCB family. Acetyl-CoA carboxylase is a heterohexamer composed of biotin carboxyl carrier protein (AccB), biotin carboxylase (AccC) and two subunits each of ACCase subunit alpha (AccA) and ACCase subunit beta (AccD). It depends on Zn(2+) as a cofactor.

It localises to the cytoplasm. The catalysed reaction is N(6)-carboxybiotinyl-L-lysyl-[protein] + acetyl-CoA = N(6)-biotinyl-L-lysyl-[protein] + malonyl-CoA. Its pathway is lipid metabolism; malonyl-CoA biosynthesis; malonyl-CoA from acetyl-CoA: step 1/1. Functionally, component of the acetyl coenzyme A carboxylase (ACC) complex. Biotin carboxylase (BC) catalyzes the carboxylation of biotin on its carrier protein (BCCP) and then the CO(2) group is transferred by the transcarboxylase to acetyl-CoA to form malonyl-CoA. The chain is Acetyl-coenzyme A carboxylase carboxyl transferase subunit beta from Jannaschia sp. (strain CCS1).